Here is a 112-residue protein sequence, read N- to C-terminus: uncharacterized protein (112 aa).

The signal sequence occupies residues 1–29 (MINLHRLCIIHVVATLLSTLLSLISVAIS). The N-linked (GlcNAc...) asparagine glycan is linked to N84. Positions 84–112 (NLSKGYNQRPEGSKEESHMVVKEKRKGDH) are disordered. Residues 94–112 (EGSKEESHMVVKEKRKGDH) are compositionally biased toward basic and acidic residues.

It is found in the secreted. This is an uncharacterized protein from Homo sapiens (Human).